Here is a 69-residue protein sequence, read N- to C-terminus: U2-agatoxin-Ao1z (69 aa).

Positions M1 to A20 are cleaved as a signal peptide. A propeptide spanning residues V21 to R34 is cleaved from the precursor. 3 disulfide bridges follow: C37–C53, C44–C58, and C52–C68.

Belongs to the neurotoxin 01 (U2-agtx) family. Expressed by the venom gland.

The protein resides in the secreted. Functionally, insect active toxin causing rapid but reversible paralysis in crickets. No activity shown in mammals. Does not show effect on mammalian voltage-gated calcium channels. The chain is U2-agatoxin-Ao1z from Agelena orientalis (Funnel-web spider).